The chain runs to 179 residues: MKQFLDFLPLVVFFAFYKIYDIYAATAALIVATAIVLIYSWVRFRKVEKMALITFVLVVVFGGLTLFFHNDEFIKWKVTVIYALFAGALLVSQWVMKKPLIQRMLGKELTLPQPVWSKLNLAWAVFFILCGLANIYIAFWLPQNIWVNFKVFGLTALTLIFTLLSGIYIYRHMPQEDKS.

Transmembrane regions (helical) follow at residues 22 to 42, 50 to 70, 76 to 96, 121 to 141, and 149 to 169; these read IYAATAALIVATAIVLIYSWV, MALITFVLVVVFGGLTLFFHN, WKVTVIYALFAGALLVSQWVM, LAWAVFFILCGLANIYIAFWL, and FKVFGLTALTLIFTLLSGIYI.

Belongs to the YciB family.

The protein localises to the cell inner membrane. Its function is as follows. Plays a role in cell envelope biogenesis, maintenance of cell envelope integrity and membrane homeostasis. The polypeptide is Inner membrane-spanning protein YciB (Shigella boydii serotype 18 (strain CDC 3083-94 / BS512)).